The following is a 61-amino-acid chain: Short neurotoxin 1 (61 aa).

Disulfide bonds link C3/C23, C17/C40, C42/C53, and C54/C59.

The protein belongs to the three-finger toxin family. Short-chain subfamily. Type I alpha-neurotoxin sub-subfamily. As to expression, expressed by the venom gland.

The protein resides in the secreted. Binds with high affinity to muscular nicotinic acetylcholine receptors (nAChRs) (tested on Torpedo marmorata AChR, Kd=0.07 nM) and with low affinity to neuronal alpha-7/CHRNA7 nAChRs (tested on chimeric receptor, Kd=3 uM) and inhibit acetylcholine from binding to the receptor, thereby impairing neuromuscular transmission. Produces peripheral paralysis by blocking neuromuscular transmission at the postsynaptic site. This Naja pallida (Red spitting cobra) protein is Short neurotoxin 1.